Here is a 439-residue protein sequence, read N- to C-terminus: Acyl transferase 7 (439 aa).

A disordered region spans residues 1–25; sequence MAAAAPDKAVERLSQKLVHPSSPTP. Catalysis depends on proton acceptor residues histidine 176 and aspartate 383.

Belongs to the plant acyltransferase family.

Its function is as follows. Involved in the incorporation of ferulate into the cell wall. May act as arabinoxylan feruloyl transferase. In Oryza sativa subsp. japonica (Rice), this protein is Acyl transferase 7.